Consider the following 470-residue polypeptide: Sugar transporter ERD6-like 8 (470 aa).

Over residues methionine 1–glutamate 16 the composition is skewed to basic and acidic residues. Positions methionine 1–glycine 24 are disordered. 12 helical membrane passes run tryptophan 33–valine 53, glutamine 73–glycine 93, valine 110–phenylalanine 130, phenylalanine 133–isoleucine 153, threonine 164–valine 184, threonine 188–proline 208, phenylalanine 270–isoleucine 290, glycine 307–isoleucine 327, leucine 335–leucine 355, glycine 373–methionine 393, valine 409–isoleucine 429, and glycine 434–valine 454.

The protein belongs to the major facilitator superfamily. Sugar transporter (TC 2.A.1.1) family.

Its subcellular location is the membrane. In terms of biological role, sugar transporter. In Arabidopsis thaliana (Mouse-ear cress), this protein is Sugar transporter ERD6-like 8.